The following is a 196-amino-acid chain: Large ribosomal subunit protein eL15 (196 aa).

Disordered regions lie at residues 72–93 (SARK…TRIT) and 163–196 (GLTG…GKGK).

Belongs to the eukaryotic ribosomal protein eL15 family. Part of the 50S ribosomal subunit. Interacts with protein L7Ae and weakly with L44e.

The chain is Large ribosomal subunit protein eL15 (rpl15e) from Haloarcula marismortui (strain ATCC 43049 / DSM 3752 / JCM 8966 / VKM B-1809) (Halobacterium marismortui).